The sequence spans 119 residues: NAD(P)H-quinone oxidoreductase subunit M (119 aa).

Belongs to the complex I NdhM subunit family. NDH-1 can be composed of about 15 different subunits; different subcomplexes with different compositions have been identified which probably have different functions.

The protein localises to the cellular thylakoid membrane. The catalysed reaction is a plastoquinone + NADH + (n+1) H(+)(in) = a plastoquinol + NAD(+) + n H(+)(out). The enzyme catalyses a plastoquinone + NADPH + (n+1) H(+)(in) = a plastoquinol + NADP(+) + n H(+)(out). Functionally, NDH-1 shuttles electrons from an unknown electron donor, via FMN and iron-sulfur (Fe-S) centers, to quinones in the respiratory and/or the photosynthetic chain. The immediate electron acceptor for the enzyme in this species is believed to be plastoquinone. Couples the redox reaction to proton translocation, and thus conserves the redox energy in a proton gradient. Cyanobacterial NDH-1 also plays a role in inorganic carbon-concentration. The protein is NAD(P)H-quinone oxidoreductase subunit M of Picosynechococcus sp. (strain ATCC 27264 / PCC 7002 / PR-6) (Agmenellum quadruplicatum).